A 117-amino-acid polypeptide reads, in one-letter code: MIKAAVTKESLYRMNTLMEAFQGFLGLDLGEFTFKVKPGVFLLTDVKSYLIGDKYDDAFNALIDFVLRNDRDAVEGTETDVSIRLGLSPSDMVVKRQDKTFTFTHGDLEFEVHWINL.

The protein is Putative gene 49 protein (49) of Bacillus subtilis (Bacteriophage SP01).